A 360-amino-acid polypeptide reads, in one-letter code: MFVDSVEIIIASGKGGPGMVSFRREKFVIKGGPDGGDGGDGGDVYFEVDNNTDTLASFRGTKHHKAKNGAPGGTRNCAGKKGEDKIIVVPPGTQVFVGDELWLDLVEPKERVLALKGGKGGLGNAHFKSATKQQPTYAQKGLEGVEKCVRLELKLIADIGLVGFPNAGKSTLISTISNAKPKIANYEFTTLVPNLGVVSVDEKSGFLMADIPGIIEGASEGKGLGISFLKHIERTKVLAFVLDASRLDLGIKEQYQRLRLELEKFSSALANKPFGVLLNKCDVVENIDEMTKDFCAFLNLGAQKLNEFGLEPYLGFLHPHLTNDFENNPNEQSALFVLPLSAVSALNVHALKFVLLEALP.

One can recognise an Obg domain in the interval 1–156 (MFVDSVEIII…KCVRLELKLI (156 aa)). Residues 157-360 (ADIGLVGFPN…LKFVLLEALP (204 aa)) form the OBG-type G domain. GTP contacts are provided by residues 163–170 (GFPNAGKS), 188–192 (FTTLV), 210–213 (DIPG), 279–282 (NKCD), and 341–343 (SAV). Residues serine 170 and threonine 190 each coordinate Mg(2+).

It belongs to the TRAFAC class OBG-HflX-like GTPase superfamily. OBG GTPase family. In terms of assembly, monomer. Mg(2+) is required as a cofactor.

The protein resides in the cytoplasm. Its function is as follows. An essential GTPase which binds GTP, GDP and possibly (p)ppGpp with moderate affinity, with high nucleotide exchange rates and a fairly low GTP hydrolysis rate. Plays a role in control of the cell cycle, stress response, ribosome biogenesis and in those bacteria that undergo differentiation, in morphogenesis control. The sequence is that of GTPase Obg from Helicobacter pylori (strain ATCC 700392 / 26695) (Campylobacter pylori).